Consider the following 287-residue polypeptide: Vesicle-associated protein 4-3 (287 aa).

A compositionally biased stretch (basic and acidic residues) spans 1–14 (MALTEDKSDSDGRR). Residues 1–45 (MALTEDKSDSDGRRWGKFKLPFRNSNSQAPSASSSSSMATSSSSV) form a disordered region. Low complexity predominate over residues 25–45 (SNSQAPSASSSSSMATSSSSV). The MSP domain occupies 99–221 (RLKLDPSAKL…EEQVMRVVFL (123 aa)).

The protein belongs to the VAMP-associated protein (VAP) (TC 9.B.17) family.

Functionally, may play a role in vesicle trafficking. The chain is Vesicle-associated protein 4-3 (PVA43) from Arabidopsis thaliana (Mouse-ear cress).